A 379-amino-acid polypeptide reads, in one-letter code: Chaperone protein DnaJ (379 aa).

The J domain occupies 5–70 (DYYEILGVSK…QKRAAYDQYG (66 aa)). The segment at 134–212 (GVTKEIRIPT…CHGHGRVEKS (79 aa)) adopts a CR-type zinc-finger fold. Zn(2+) is bound by residues Cys147, Cys150, Cys164, Cys167, Cys186, Cys189, Cys200, and Cys203. CXXCXGXG motif repeat units lie at residues 147-154 (CDVCHGSG), 164-171 (CPTCHGSG), 186-193 (CPHCQGRG), and 200-207 (CHKCHGHG).

This sequence belongs to the DnaJ family. In terms of assembly, homodimer. Zn(2+) is required as a cofactor.

Its subcellular location is the cytoplasm. Participates actively in the response to hyperosmotic and heat shock by preventing the aggregation of stress-denatured proteins and by disaggregating proteins, also in an autonomous, DnaK-independent fashion. Unfolded proteins bind initially to DnaJ; upon interaction with the DnaJ-bound protein, DnaK hydrolyzes its bound ATP, resulting in the formation of a stable complex. GrpE releases ADP from DnaK; ATP binding to DnaK triggers the release of the substrate protein, thus completing the reaction cycle. Several rounds of ATP-dependent interactions between DnaJ, DnaK and GrpE are required for fully efficient folding. Also involved, together with DnaK and GrpE, in the DNA replication of plasmids through activation of initiation proteins. This chain is Chaperone protein DnaJ, found in Salmonella agona (strain SL483).